The following is a 293-amino-acid chain: Proximal tail tube connector protein (293 aa).

Disordered stretches follow at residues 106–166 (VGVK…FKRD) and 192–240 (QIEE…NDKL). The span at 112–126 (TKNDTDRNDNRDVKQ) shows a compositional bias: basic and acidic residues. Polar residues predominate over residues 127–160 (DLTSNGTSSTDAKQNDTSKTTGNEKSSGSGSITD). Residues 193-205 (IEEHNENKKRDTK) show a composition bias toward basic and acidic residues. Low complexity predominate over residues 206 to 231 (TSNTTDTTSNTTGTSTLDSDSKTSNK).

This sequence belongs to the phi29likevirus proximal tail tube connector protein family.

The protein resides in the virion. Forms the proximal part of the tail tube. This is Proximal tail tube connector protein (11) from Bacillus phage PZA (Bacteriophage PZA).